The chain runs to 120 residues: MWGYIHLISWVAIVVLTVTALLIYSKSTKSFTMLQMINRVFYILVILSGIMMVKYSIEQSWILAIFKILMGIIVIGVVEMLLSYRKQQKPTGMFLMIFVIVVVITISLGFYLSGGYPLFN.

The next 4 helical transmembrane spans lie at 3 to 23 (GYIHLISWVAIVVLTVTALLI), 33 to 53 (MLQMINRVFYILVILSGIMMV), 62 to 82 (ILAIFKILMGIIVIGVVEMLL), and 92 to 112 (GMFLMIFVIVVVITISLGFYL).

It belongs to the UPF0344 family.

The protein localises to the cell membrane. This is UPF0344 protein LMOf2365_2298 from Listeria monocytogenes serotype 4b (strain F2365).